The primary structure comprises 118 residues: Large ribosomal subunit protein bL19 (118 aa).

This sequence belongs to the bacterial ribosomal protein bL19 family.

Its function is as follows. This protein is located at the 30S-50S ribosomal subunit interface and may play a role in the structure and function of the aminoacyl-tRNA binding site. The sequence is that of Large ribosomal subunit protein bL19 from Parafrankia sp. (strain EAN1pec).